A 518-amino-acid polypeptide reads, in one-letter code: G-protein coupled receptor 161 (518 aa).

At 1–26 the chain is on the extracellular side; sequence MNSSSDGANEGAGAAADNGPTKVAES. N2 is a glycosylation site (N-linked (GlcNAc...) asparagine). Residues 27–47 traverse the membrane as a helical segment; that stretch reads IAIIIIDILICLGNLVIVVTL. At 48–59 the chain is on the cytoplasmic side; the sequence is YKKSYLLSLSNK. A helical membrane pass occupies residues 60 to 80; that stretch reads FVFSLTFSNLLLSMLVLPFVV. Residues 81-97 lie on the Extracellular side of the membrane; sequence VSSILREWIFGVVWCNF. A disulfide bond links C95 and C173. N96 carries N-linked (GlcNAc...) asparagine glycosylation. The helical transmembrane segment at 98-118 threads the bilayer; the sequence is SALLYMLISSASMLTLGIIAI. Over 119 to 138 the chain is Cytoplasmic; sequence DRYYAVLYPMVYPMKITGNR. Residues 139–159 traverse the membrane as a helical segment; that stretch reads AVLALVYVWLHSLIGCLPPLF. Residues 160–185 lie on the Extracellular side of the membrane; that stretch reads GWSTLEFDHFKWMCVAAWHKEAGYTA. A helical membrane pass occupies residues 186–206; sequence FWQVWCALLPFIVMMICYGFI. The Cytoplasmic segment spans residues 207 to 264; the sequence is FRVARIKARKIHCGTVIIVQEASQKNGRKNSSTSTSSSGSRKNGFSSIVYSANQCKAL. Residues 265–285 traverse the membrane as a helical segment; it reads ITILVVIGAFVLTWGPYMIVI. The Extracellular segment spans residues 286–301; the sequence is STEALKGKNSVSPVLE. Residues 302 to 322 traverse the membrane as a helical segment; sequence TLATWLSFTSAICHPLIYGLW. At 323 to 518 the chain is on the cytoplasmic side; sequence NKTVRKELLG…GNIETSKCDV (196 aa). Positions 429–448 are disordered; the sequence is EVEQKNDARTMPTQPTAPSE. Positions 439-448 are enriched in polar residues; sequence MPTQPTAPSE.

Belongs to the G-protein coupled receptor 1 family.

Its subcellular location is the cell projection. It localises to the cilium membrane. The protein localises to the cell membrane. Its function is as follows. Key negative regulator of Shh signaling during neural tube development. Recruited to primary cilia and acts as a regulator of the PKA-dependent basal repression machinery in Shh signaling by increasing cAMP levels, leading to promote the PKA-dependent processing of gli3 into gli3r and repress the Shh signaling. In presence of shh, it is removed from primary cilia, preventing its activity and allowing activation of the Shh signaling. The chain is G-protein coupled receptor 161 (gpr161) from Xenopus tropicalis (Western clawed frog).